We begin with the raw amino-acid sequence, 194 residues long: Holliday junction branch migration complex subunit RuvA (194 aa).

Residues 1 to 64 (MIGRLRGILA…EDSVALYGFL (64 aa)) are domain I. The interval 65–140 (REGERRLFRD…RAADFSSGAP (76 aa)) is domain II. The interval 140 to 144 (PITGQ) is flexible linker. Residues 145–194 (LGPDAVSEATVALQQLGYKPAEAARMARDAGAEGDEVATVIRKALQAALR) form a domain III region.

Belongs to the RuvA family. As to quaternary structure, homotetramer. Forms an RuvA(8)-RuvB(12)-Holliday junction (HJ) complex. HJ DNA is sandwiched between 2 RuvA tetramers; dsDNA enters through RuvA and exits via RuvB. An RuvB hexamer assembles on each DNA strand where it exits the tetramer. Each RuvB hexamer is contacted by two RuvA subunits (via domain III) on 2 adjacent RuvB subunits; this complex drives branch migration. In the full resolvosome a probable DNA-RuvA(4)-RuvB(12)-RuvC(2) complex forms which resolves the HJ.

It is found in the cytoplasm. Functionally, the RuvA-RuvB-RuvC complex processes Holliday junction (HJ) DNA during genetic recombination and DNA repair, while the RuvA-RuvB complex plays an important role in the rescue of blocked DNA replication forks via replication fork reversal (RFR). RuvA specifically binds to HJ cruciform DNA, conferring on it an open structure. The RuvB hexamer acts as an ATP-dependent pump, pulling dsDNA into and through the RuvAB complex. HJ branch migration allows RuvC to scan DNA until it finds its consensus sequence, where it cleaves and resolves the cruciform DNA. The protein is Holliday junction branch migration complex subunit RuvA of Xanthomonas euvesicatoria pv. vesicatoria (strain 85-10) (Xanthomonas campestris pv. vesicatoria).